The sequence spans 198 residues: MNLLILFFGYLFGSFPSGYLAGRIAKGIDIRSLGSGSTGATNVLRHIGKRAAIIVFLLDVFKGVLSILLAKYLLLNDSWQVAIGLSTLIGHIWPVWLNWKGGKAVATGLGIFLGLSWQVGLATLGVFIIMITLFRIVSLASVSASLALPLIMFLSFSGSNISLPFLIVSLLAMLLVIWRHRENIVRLIRGKEPRIGQP.

A run of 6 helical transmembrane segments spans residues 1–21, 53–73, 79–99, 111–131, 136–156, and 158–178; these read MNLL…GYLA, IIVF…AKYL, WQVA…WLNW, IFLG…IIMI, IVSL…FLSF, and GSNI…LVIW.

This sequence belongs to the PlsY family. As to quaternary structure, probably interacts with PlsX.

It localises to the cell inner membrane. It carries out the reaction an acyl phosphate + sn-glycerol 3-phosphate = a 1-acyl-sn-glycero-3-phosphate + phosphate. Its pathway is lipid metabolism; phospholipid metabolism. Catalyzes the transfer of an acyl group from acyl-phosphate (acyl-PO(4)) to glycerol-3-phosphate (G3P) to form lysophosphatidic acid (LPA). This enzyme utilizes acyl-phosphate as fatty acyl donor, but not acyl-CoA or acyl-ACP. This chain is Glycerol-3-phosphate acyltransferase, found in Prochlorococcus marinus (strain NATL1A).